The following is a 382-amino-acid chain: Putative acetyl-CoA C-acetyltransferase VraB (382 aa).

Residue Cys86 is the Acyl-thioester intermediate of the active site. His338 functions as the Proton acceptor in the catalytic mechanism.

It belongs to the thiolase-like superfamily. Thiolase family.

In Staphylococcus epidermidis (strain ATCC 35984 / DSM 28319 / BCRC 17069 / CCUG 31568 / BM 3577 / RP62A), this protein is Putative acetyl-CoA C-acetyltransferase VraB (vraB).